A 590-amino-acid chain; its full sequence is Mannosyl-oligosaccharide 1,2-alpha-mannosidase mans-2 (590 aa).

Over 1 to 9 the chain is Cytoplasmic; it reads MKTVRFNKQ. Residues 10–30 form a helical; Signal-anchor for type II membrane protein membrane-spanning segment; sequence ALAILAACFIFLLCVVCYFSA. Over 31 to 590 the chain is Lumenal; it reads SSESHNAVVV…EAHPVPVLTN (560 aa). Residues 88-102 are compositionally biased toward basic and acidic residues; sequence PARVESKPPGEKTST. The disordered stretch occupies residues 88–112; it reads PARVESKPPGEKTSTEPEETGVGKA. 4 N-linked (GlcNAc...) asparagine glycosylation sites follow: Asn-156, Asn-212, Asn-373, and Asn-402. Residues Cys-423 and Cys-456 are joined by a disulfide bond. Glu-470 (proton donor) is an active-site residue. Thr-580 lines the Ca(2+) pocket.

This sequence belongs to the glycosyl hydrolase 47 family. The cofactor is Ca(2+).

It localises to the membrane. The enzyme catalyses N(4)-(alpha-D-Man-(1-&gt;2)-alpha-D-Man-(1-&gt;2)-alpha-D-Man-(1-&gt;3)-[alpha-D-Man-(1-&gt;2)-alpha-D-Man-(1-&gt;3)-[alpha-D-Man-(1-&gt;2)-alpha-D-Man-(1-&gt;6)]-alpha-D-Man-(1-&gt;6)]-beta-D-Man-(1-&gt;4)-beta-D-GlcNAc-(1-&gt;4)-beta-D-GlcNAc)-L-asparaginyl-[protein] (N-glucan mannose isomer 9A1,2,3B1,2,3) + 4 H2O = N(4)-(alpha-D-Man-(1-&gt;3)-[alpha-D-Man-(1-&gt;3)-[alpha-D-Man-(1-&gt;6)]-alpha-D-Man-(1-&gt;6)]-beta-D-Man-(1-&gt;4)-beta-D-GlcNAc-(1-&gt;4)-beta-D-GlcNAc)-L-asparaginyl-[protein] (N-glucan mannose isomer 5A1,2) + 4 beta-D-mannose. It catalyses the reaction N(4)-(alpha-D-Man-(1-&gt;2)-alpha-D-Man-(1-&gt;2)-alpha-D-Man-(1-&gt;3)-[alpha-D-Man-(1-&gt;3)-[alpha-D-Man-(1-&gt;2)-alpha-D-Man-(1-&gt;6)]-alpha-D-Man-(1-&gt;6)]-beta-D-Man-(1-&gt;4)-beta-D-GlcNAc-(1-&gt;4)-beta-D-GlcNAc)-L-asparaginyl-[protein] (N-glucan mannose isomer 8A1,2,3B1,3) + 3 H2O = N(4)-(alpha-D-Man-(1-&gt;3)-[alpha-D-Man-(1-&gt;3)-[alpha-D-Man-(1-&gt;6)]-alpha-D-Man-(1-&gt;6)]-beta-D-Man-(1-&gt;4)-beta-D-GlcNAc-(1-&gt;4)-beta-D-GlcNAc)-L-asparaginyl-[protein] (N-glucan mannose isomer 5A1,2) + 3 beta-D-mannose. Its pathway is protein modification; protein glycosylation. Involved in the maturation of Asn-linked oligosaccharides. Progressively trim alpha-1,2-linked mannose residues from Man(9)GlcNAc(2) to produce Man(5)GlcNAc(2). The polypeptide is Mannosyl-oligosaccharide 1,2-alpha-mannosidase mans-2 (Caenorhabditis elegans).